Consider the following 507-residue polypeptide: MRINPGEIVKVLESKIEGFKEEINLEDVGKVIQVGDGIARAYGLNNVMANEMVEFVETGTIGVAFNLEEDNVGIIILGDYKGIKEGHTVRRLKKIMQVPVGEALLGRVVNPLGEPVDGLGPIEAKEFRDVEVKAPGVIYRKPVDTPLQTGIKIIDALIPIGRGQRELIIGDRQTGKTAIAIDTIINQKGKGVYCVYVAIGQKASAVARLVSKLKEAGAMEYTTVVVASAADNAALQYIAPYAGCAMGEYFLYNGKDALVIYDDLSKHAVAYRQLSLLLRRPPGREAYPGDVFYLHSRLLERAARLDEKYGGGSLTALPIIETQANDISAYIPTNVISITDGQIYLEPSLFYAGQRPAVNIGLSVSRVGGAAQIKAMKKVAGSLKLDLAQYQELETFAQFATELDPATQAQITRGQRLMELMKQEQYAPMEVEEQVAVLYAGINGYLDDLEVEKVRLFEKKLIEFLKDKKSEILNKIREEKDLSEETEKMLKEAIEEFKSEFVKVYGK.

170–177 (GDRQTGKT) contacts ATP.

The protein belongs to the ATPase alpha/beta chains family. In terms of assembly, F-type ATPases have 2 components, CF(1) - the catalytic core - and CF(0) - the membrane proton channel. CF(1) has five subunits: alpha(3), beta(3), gamma(1), delta(1), epsilon(1). CF(0) has three main subunits: a(1), b(2) and c(9-12). The alpha and beta chains form an alternating ring which encloses part of the gamma chain. CF(1) is attached to CF(0) by a central stalk formed by the gamma and epsilon chains, while a peripheral stalk is formed by the delta and b chains.

It is found in the cell inner membrane. It catalyses the reaction ATP + H2O + 4 H(+)(in) = ADP + phosphate + 5 H(+)(out). Produces ATP from ADP in the presence of a proton gradient across the membrane. The alpha chain is a regulatory subunit. This Thermosipho africanus (strain TCF52B) protein is ATP synthase subunit alpha.